Reading from the N-terminus, the 69-residue chain is MIFKVYYQEDAAQMPVRERTKSLYIEGESEADVRLKLAKQNFNIEYVTAVTGAYLEYEQANSDFKVVNI.

It belongs to the RNA polymerase subunit epsilon family. In terms of assembly, RNAP is composed of a core of 2 alpha, a beta and a beta' subunit. The core is associated with a delta subunit, and at least one of epsilon or omega. When a sigma factor is associated with the core the holoenzyme is formed, which can initiate transcription.

It carries out the reaction RNA(n) + a ribonucleoside 5'-triphosphate = RNA(n+1) + diphosphate. In terms of biological role, a non-essential component of RNA polymerase (RNAP). The chain is DNA-directed RNA polymerase subunit epsilon from Shouchella clausii (strain KSM-K16) (Alkalihalobacillus clausii).